The primary structure comprises 605 residues: Glucose oxidase (605 aa).

A signal peptide spans 1-16; the sequence is MKTILSSSLVVSMAAA. FAD is bound by residues Leu-51 and Thr-52. Asn-65 carries an N-linked (GlcNAc...) asparagine glycan. Glu-72 is a binding site for FAD. The N-linked (GlcNAc...) asparagine glycan is linked to Asn-111. Positions 125, 129, 130, and 132 each coordinate FAD. A disulfide bond links Cys-186 and Cys-228. Residue Asn-190 is glycosylated (N-linked (GlcNAc...) asparagine). Residue Val-272 participates in FAD binding. 4 N-linked (GlcNAc...) asparagine glycosylation sites follow: Asn-280, Asn-377, Asn-410, and Asn-495. His-538 (proton acceptor) is an active-site residue. O2 contacts are provided by Arg-559 and Val-560. Gly-571 and Met-583 together coordinate FAD.

It belongs to the GMC oxidoreductase family. In terms of assembly, homodimer. It depends on FAD as a cofactor.

It localises to the secreted. It is found in the cell wall. The protein resides in the cytoplasm. Its subcellular location is the extracellular space. The protein localises to the extracellular matrix. The catalysed reaction is beta-D-glucose + O2 = D-glucono-1,5-lactone + H2O2. Its function is as follows. Glucose oxidase catalyzes the oxidation of beta-D-glucose to D-glucono-delta-lactone and hydrogen peroxide in the presence of molecular oxygen. Acts as a critical factor modulating pathogenicity by controlling transcription of genes important for fungal secondary metabolism and infection such as those coding for enzymes involved in degradation of the host cell wall. In Aspergillus carbonarius (strain ITEM 5010), this protein is Glucose oxidase.